Consider the following 834-residue polypeptide: Transcription intermediary factor 1-beta (834 aa).

The residue at position 2 (A2) is an N-acetylalanine. A compositionally biased stretch (low complexity) spans 13 to 23 (AATAASAASGS). The segment at 13–56 (AATAASAASGSPGSGEGSAGGEKRPAASSAAAASAAASSPAGGG) is disordered. 3 positions are modified to phosphoserine: S23, S26, and S30. K35 participates in a covalent cross-link: Glycyl lysine isopeptide (Lys-Gly) (interchain with G-Cter in SUMO2). A compositionally biased stretch (low complexity) spans 38 to 52 (AASSAAAASAAASSP). S51 carries the phosphoserine modification. Residues 66–122 (CGVCRERLRPERDPRLLPCLHSACSACLGPATPAAANNSGDGGSAGDGAMVDCPVCK) form an RING-type zinc finger. K128 participates in a covalent cross-link: Glycyl lysine isopeptide (Lys-Gly) (interchain with G-Cter in SUMO2). A Phosphoserine modification is found at S139. Residues 149 to 196 (DANQCCTSCEDNAPATSYCVECSEPLCETCVEAHQRVKYTKDHTVRST) form a B box-type 1 zinc finger. Residues C154, C157, C178, and H182 each coordinate Zn(2+). A Glycyl lysine isopeptide (Lys-Gly) (interchain with G-Cter in SUMO2) cross-link involves residue K200. A B box-type 2 zinc finger spans residues 205–246 (ERTVYCNVHKHEPLVLFCESCDTLTCRDCQLNAHKDHQYQFL). Zn(2+) is bound by residues C210, H213, C233, and H238. Positions 247 to 377 (EDAVRNQRKL…LIYFQLHRAL (131 aa)) are leucine zipper alpha helical coiled-coil region. The interaction with MAGEC2 stretch occupies residues 248-377 (DAVRNQRKLL…LIYFQLHRAL (130 aa)). Residues K255 and K262 each participate in a glycyl lysine isopeptide (Lys-Gly) (interchain with G-Cter in SUMO2) cross-link. N6-acetyllysine is present on K267. Residue K273 forms a Glycyl lysine isopeptide (Lys-Gly) (interchain with G-Cter in SUMO2) linkage. K305 bears the N6-acetyllysine; alternate mark. K305 is covalently cross-linked (Glycyl lysine isopeptide (Lys-Gly) (interchain with G-Cter in SUMO2); alternate). Residue K320 forms a Glycyl lysine isopeptide (Lys-Gly) (interchain with G-Cter in SUMO2) linkage. At K341 the chain carries N6-acetyllysine. Residue K367 forms a Glycyl lysine isopeptide (Lys-Gly) (interchain with G-Cter in SUMO2) linkage. Positions 367-371 (KLIYF) are involved in binding PPP1CA. K378 carries the N6-acetyllysine; alternate modification. Residue K378 forms a Glycyl lysine isopeptide (Lys-Gly) (interchain with G-Cter in SUMO2); alternate linkage. Residue K378 forms a Glycyl lysine isopeptide (Lys-Gly) (interchain with G-Cter in SUMO1); alternate linkage. K408 is covalently cross-linked (Glycyl lysine isopeptide (Lys-Gly) (interchain with G-Cter in SUMO2)). Residues 412 to 480 (ERPGTNSTGP…SRSGEGEVSG (69 aa)) are disordered. At S418 the chain carries Phosphoserine. K435 participates in a covalent cross-link: Glycyl lysine isopeptide (Lys-Gly) (interchain with G-Cter in SUMO2). Polar residues predominate over residues 435-444 (KQGSGSSQPM). Phosphoserine occurs at positions 438, 440, and 454. A Glycyl lysine isopeptide (Lys-Gly) (interchain with G-Cter in SUMO2); alternate cross-link involves residue K469. A Glycyl lysine isopeptide (Lys-Gly) (interchain with G-Cter in SUMO1); alternate cross-link involves residue K469. Citrulline is present on R470. Residue S471 is modified to Phosphoserine. R472 bears the Citrulline mark. Phosphoserine is present on residues S473, S479, and S489. Residues 476-513 (GEVSGLLRKVPRVSLERLDLDLTSDSQPPVFKVFPGST) are HP1 box. Positions 481-494 (LLRKVPRVSLERLD) match the PxVxL motif motif. T498 is subject to Phosphothreonine. Position 501 is a phosphoserine (S501). K507 is covalently cross-linked (Glycyl lysine isopeptide (Lys-Gly) (interchain with G-Cter in SUMO2)). K554 participates in a covalent cross-link: Glycyl lysine isopeptide (Lys-Gly) (interchain with G-Cter in SUMO2); alternate. A Glycyl lysine isopeptide (Lys-Gly) (interchain with G-Cter in SUMO); alternate cross-link involves residue K554. K575 is covalently cross-linked (Glycyl lysine isopeptide (Lys-Gly) (interchain with G-Cter in SUMO2)). The segment at 581 to 602 (LTEGPGAEGPRLASPSGSTSSG) is disordered. At S594 the chain carries Phosphoserine. A PHD-type zinc finger spans residues 625–672 (ATICRVCQKPGDLVMCNQCEFCFHLDCHLPALQDVPGEEWSCSLCHVL). K676 participates in a covalent cross-link: Glycyl lysine isopeptide (Lys-Gly) (interchain with G-Cter in SUMO). Residues S683, S689, and S697 each carry the phosphoserine modification. The Bromo domain maps to 695–799 (KLSPANQRKC…RFFETRMNDA (105 aa)). K750 is covalently cross-linked (Glycyl lysine isopeptide (Lys-Gly) (interchain with G-Cter in SUMO2); alternate). Residue K750 forms a Glycyl lysine isopeptide (Lys-Gly) (interchain with G-Cter in SUMO1); alternate linkage. K750 participates in a covalent cross-link: Glycyl lysine isopeptide (Lys-Gly) (interchain with G-Cter in SUMO); alternate. The residue at position 752 (S752) is a Phosphoserine. Y755 carries the post-translational modification Phosphotyrosine. Residue S757 is modified to Phosphoserine. An N6-acetyllysine; alternate mark is found at K770, K774, and K779. Residues K770, K774, and K779 each participate in a glycyl lysine isopeptide (Lys-Gly) (interchain with G-Cter in SUMO2); alternate cross-link. A Glycyl lysine isopeptide (Lys-Gly) (interchain with G-Cter in SUMO1); alternate cross-link involves residue K779. S784 is modified (phosphoserine). K804 is covalently cross-linked (Glycyl lysine isopeptide (Lys-Gly) (interchain with G-Cter in SUMO2)). S824 carries the phosphoserine; by ATM and ATR and dsDNA kinase modification.

Belongs to the TRIM/RBCC family. As to quaternary structure, oligomer; the RBCC domain homotrimerizes and interacts with one molecule of KRAB to form the KRAB-KAP1 corepressor complex. Interacts with SETX. Binding to a KRAB domain is an absolute requirement for silencing gene expression. Interacts with a number of KRAB-ZFP proteins including ZNF10, ZFP53, ZFP68, ZNF382 and ZNF256. Interacts with NCOR1, NR3C1 and CHD3. Interacts with CEBPB (via the RING-type and PHD-type zinc fingers). Interacts with CBX5 (via the PxVxL motif); the interaction occurs in interphase nuclei and competes for binding POGZ. Interacts with POGZ; the interaction competes for interaction with CBX5. Interacts with SETDB1; the interaction is enhanced by KAP1 sumoylation, stimulates SETDB1 histone methyltransferase activity and gene silencing. Interacts (via the PHD-type zinc finger) with UBE2I; the interaction is required for sumoylation and repressor activity. Component of the TRIM28/KAP1-ERBB4-MDM2 complex involved in connecting growth factor and DNA damage responses. Interacts directly with ERBB4; the interaction represses ERBB4-mediated transcription activity. Interacts with MDM2; the interaction contributes to p53/TP53 inactivation. Component of the TRIM28/KAP1-MDM2-p53/TP53; involved in regulating p53/TP53 stabilization and activity. Interacts (via the leucine zipper alpha helical coiled-coil) with E2F1 (central region); the interaction inhibits E2F1 acetylation and transcriptional activity. Interacts with PPP1CA; the interaction dephosphorylates TRIM28 at Ser-824 and forms a complex at the p21 promoter site. Interacts with PPP1CB; the interaction is weak but is increased on dephosphorylation at Ser-824. Interacts with CEBPB and NR3C1. Interacts with CBX5 (via the PxVxL motif); the interaction occurs in interphase nuclei and competes for binding POGZ. Component of a ternary complex that includes TRIM28, a HP1 protein (CBX1, CBX3 OR CBX5), a KRAB domain-containing protein, and DNA. Interacts with SMARCAD1. Interacts with, and sumoylates IRF7. Interacts with MAGEC2. Part of a complex composed of TRIM28, HDAC1, HDAC2 and EHMT2. Interacts (via the RBCC domain) with KOX1 (via the KRAB domain), ZNF268 (via the KRAB domain) and ZNF300 (via the KRAB domain); the interactions increase KOX1, ZNF268 and ZNF300 nuclear localization activities. Interacts with AICDA. The large PER complex involved in the histone methylation is composed of at least PER2, CBX3, TRIM28, SUV39H1 and/or SUV39H2; CBX3 mediates the formation of the complex. Interacts with NR4A3; the interactions potentiates NR4A3 activity on NurRE promoter. Interacts (unphosphorylated or phosphorylated form) with ZBTB1 (via BTB domain). Probably part of a corepressor complex containing ZNF304, TRIM28, SETDB1 and DNMT1. Interacts with ATRX. Forms a complex with ATRX, SETDB1 and ZNF274. Interacts with ZFP568; the interaction mediates ZFP568 transcriptional repression activity. Interacts with RRP1B. Interacts with CRY1. Interacts with ZNF263; recruited to the SIX3 promoter along with other proteins involved in chromatin modification and transcriptional corepression where it contributes to transcriptional repression. Interacts with CYREN (via XLF motif). Interacts with TRIM17; this interaction prevents TRIM28 activity. Interacts with ZNF746. Interacts with PHF13. Interacts with ZNF354C. Interacts with ZNF432; the interaction is independent of PARP1. Post-translationally, ATM-induced phosphorylation on Ser-824 represses sumoylation leading to the de-repression of expression of a subset of genes involved in cell cycle control and apoptosis in response to genotoxic stress. Dephosphorylation by the phosphatases, PPP1CA and PP1CB forms, allows sumoylation and expression of TRIM28 target genes. In terms of processing, sumoylation/desumoylation events regulate TRIM28-mediated transcriptional repression. Sumoylation is required for interaction with CHD3 and SETDB1 and the corepressor activity. Represses and is repressed by Ser-824 phosphorylation. Enhances the TRIM28 corepressor activity, inhibiting transcriptional activity of a number of genes including GADD45A and CDKN1A/p21. Lys-554, Lys-779 and Lys-804 are the major sites of sumoylation. In response to Dox-induced DNA damage, enhanced phosphorylation on Ser-824 prevents sumoylation and allows de-repression of CDKN1A/p21. Auto-ubiquitinated; enhanced by MAGEA2 and MAGEC2. Post-translationally, citrullinated by PADI4. In terms of processing, ADP-ribosylated by SIRT6, promoting TRIM28/KAP1 interaction with CBX5, thereby contributing to the packaging of LINE-1 retrotransposon elements into transcriptionally repressive heterochromatin.

It is found in the nucleus. The catalysed reaction is S-ubiquitinyl-[E2 ubiquitin-conjugating enzyme]-L-cysteine + [acceptor protein]-L-lysine = [E2 ubiquitin-conjugating enzyme]-L-cysteine + N(6)-ubiquitinyl-[acceptor protein]-L-lysine.. It functions in the pathway protein modification; protein sumoylation. Nuclear corepressor for KRAB domain-containing zinc finger proteins (KRAB-ZFPs). Mediates gene silencing by recruiting CHD3, a subunit of the nucleosome remodeling and deacetylation (NuRD) complex, and SETDB1 (which specifically methylates histone H3 at 'Lys-9' (H3K9me)) to the promoter regions of KRAB target genes. Enhances transcriptional repression by coordinating the increase in H3K9me, the decrease in histone H3 'Lys-9 and 'Lys-14' acetylation (H3K9ac and H3K14ac, respectively) and the disposition of HP1 proteins to silence gene expression. Recruitment of SETDB1 induces heterochromatinization. May play a role as a coactivator for CEBPB and NR3C1 in the transcriptional activation of ORM1. Also a corepressor for ERBB4. Inhibits E2F1 activity by stimulating E2F1-HDAC1 complex formation and inhibiting E2F1 acetylation. May serve as a partial backup to prevent E2F1-mediated apoptosis in the absence of RB1. Important regulator of CDKN1A/p21(CIP1). Has E3 SUMO-protein ligase activity toward itself via its PHD-type zinc finger. Specifically sumoylates IRF7, thereby inhibiting its transactivation activity. Ubiquitinates p53/TP53 leading to its proteasomal degradation; the function is enhanced by MAGEC2 and MAGEA2, and possibly MAGEA3 and MAGEA6. Mediates the nuclear localization of KOX1, ZNF268 and ZNF300 transcription factors. Probably forms a corepressor complex required for activated KRAS-mediated promoter hypermethylation and transcriptional silencing of tumor suppressor genes (TSGs) or other tumor-related genes in colorectal cancer (CRC) cells. Required to maintain a transcriptionally repressive state of genes in undifferentiated embryonic stem cells (ESCs). In ESCs, in collaboration with SETDB1, is also required for H3K9me3 and silencing of endogenous and introduced retroviruses in a DNA-methylation independent-pathway. Associates at promoter regions of tumor suppressor genes (TSGs) leading to their gene silencing. The SETDB1-TRIM28-ZNF274 complex may play a role in recruiting ATRX to the 3'-exons of zinc-finger coding genes with atypical chromatin signatures to establish or maintain/protect H3K9me3 at these transcriptionally active regions. Acts as a corepressor for ZFP568. The protein is Transcription intermediary factor 1-beta of Mus musculus (Mouse).